We begin with the raw amino-acid sequence, 630 residues long: Pro-interleukin-16 (630 aa).

Disordered regions lie at residues 30-268 (ENPG…FPLT) and 316-343 (PKEG…ASDT). The segment covering 129–143 (IRASSSSSIKQRISS) has biased composition (low complexity). Serine 220 carries the post-translational modification Phosphoserine. Polar residues predominate over residues 321–343 (SPTSSSNEDSAANGSAETSASDT). An interaction with PPP1R12A, PPP1R12B and PPP1R12C region spans residues 404–500 (KQLDSIHVTI…IVTRKLTAES (97 aa)). 2 consecutive PDZ domains span residues 410–495 (HVTI…VTRK) and 532–617 (TVTL…IRRK).

As to quaternary structure, homotetramer. Pro-interleukin-16 interacts (via PDZ 2 domain) with PPP1R12A, PPP1R12B and PPP1R12C. Pro-interleukin-16 interacts with GRIN2A. Pro-interleukin-16 interacts with GABPB1. Pro-interleukin-16 interacts (via PDZ 3 domain) with HDAC3.

The protein resides in the secreted. The protein localises to the cytoplasm. It localises to the nucleus. Functionally, interleukin-16 stimulates a migratory response in CD4+ lymphocytes, monocytes, and eosinophils. Primes CD4+ T-cells for IL-2 and IL-15 responsiveness. Also induces T-lymphocyte expression of interleukin 2 receptor. Ligand for CD4. In terms of biological role, pro-interleukin-16 is involved in cell cycle progression in T-cells. Appears to be involved in transcriptional regulation of SKP2 and is probably part of a transcriptional repression complex on the core promoter of the SKP2 gene. May act as a scaffold for GABPB1 (the DNA-binding subunit the GABP transcription factor complex) and HDAC3 thus maintaining transcriptional repression and blocking cell cycle progression in resting T-cells. The polypeptide is Pro-interleukin-16 (IL16) (Macaca fascicularis (Crab-eating macaque)).